The chain runs to 123 residues: Ig heavy chain V region HPCG14 (123 aa).

Positions 1-114 constitute an Ig-like domain; the sequence is EVKLVESGGG…GYDYWFDVWG (114 aa).

The protein is Ig heavy chain V region HPCG14 of Mus musculus (Mouse).